The following is a 352-amino-acid chain: Protein RecA (352 aa).

ATP is bound at residue 64–71 (GPESSGKT). Residues 328–352 (NPSSVPEAEAEHDPEQDEEPTFDLE) are disordered. Acidic residues predominate over residues 335 to 352 (AEAEHDPEQDEEPTFDLE).

It belongs to the RecA family.

The protein localises to the cytoplasm. Functionally, can catalyze the hydrolysis of ATP in the presence of single-stranded DNA, the ATP-dependent uptake of single-stranded DNA by duplex DNA, and the ATP-dependent hybridization of homologous single-stranded DNAs. It interacts with LexA causing its activation and leading to its autocatalytic cleavage. The sequence is that of Protein RecA from Brevibacillus brevis (strain 47 / JCM 6285 / NBRC 100599).